A 146-amino-acid chain; its full sequence is 3-hydroxyacyl-[acyl-carrier-protein] dehydratase FabZ (146 aa).

The active site involves His49.

The protein belongs to the thioester dehydratase family. FabZ subfamily.

The protein resides in the cytoplasm. The catalysed reaction is a (3R)-hydroxyacyl-[ACP] = a (2E)-enoyl-[ACP] + H2O. Involved in unsaturated fatty acids biosynthesis. Catalyzes the dehydration of short chain beta-hydroxyacyl-ACPs and long chain saturated and unsaturated beta-hydroxyacyl-ACPs. This chain is 3-hydroxyacyl-[acyl-carrier-protein] dehydratase FabZ, found in Pseudomonas aeruginosa (strain LESB58).